The following is a 328-amino-acid chain: Biotin synthase (328 aa).

Residues 48-278 enclose the Radical SAM core domain; the sequence is FTGNSASLCS…GKSLSVCGGR (231 aa). C66, C70, and C73 together coordinate [4Fe-4S] cluster. Positions 143 and 203 each coordinate [2Fe-2S] cluster.

Belongs to the radical SAM superfamily. Biotin synthase family. Homodimer. [4Fe-4S] cluster serves as cofactor. [2Fe-2S] cluster is required as a cofactor.

The catalysed reaction is (4R,5S)-dethiobiotin + (sulfur carrier)-SH + 2 reduced [2Fe-2S]-[ferredoxin] + 2 S-adenosyl-L-methionine = (sulfur carrier)-H + biotin + 2 5'-deoxyadenosine + 2 L-methionine + 2 oxidized [2Fe-2S]-[ferredoxin]. It participates in cofactor biosynthesis; biotin biosynthesis; biotin from 7,8-diaminononanoate: step 2/2. In terms of biological role, catalyzes the conversion of dethiobiotin (DTB) to biotin by the insertion of a sulfur atom into dethiobiotin via a radical-based mechanism. This Pelobacter propionicus (strain DSM 2379 / NBRC 103807 / OttBd1) protein is Biotin synthase.